We begin with the raw amino-acid sequence, 337 residues long: GTP 3',8-cyclase (337 aa).

The Radical SAM core domain occupies 17–243; that stretch reads PFQRQYYYLR…HKSHTDGPAK (227 aa). Arginine 26 contacts GTP. 2 residues coordinate [4Fe-4S] cluster: cysteine 33 and cysteine 37. Tyrosine 39 contributes to the S-adenosyl-L-methionine binding site. Cysteine 40 is a [4Fe-4S] cluster binding site. Arginine 76 is a binding site for GTP. Glycine 80 contributes to the S-adenosyl-L-methionine binding site. Threonine 107 contributes to the GTP binding site. Serine 131 contributes to the S-adenosyl-L-methionine binding site. Lysine 168 is a GTP binding site. Methionine 202 is an S-adenosyl-L-methionine binding site. Cysteine 265 and cysteine 268 together coordinate [4Fe-4S] cluster. 270–272 lines the GTP pocket; the sequence is RLR. Position 282 (cysteine 282) interacts with [4Fe-4S] cluster.

The protein belongs to the radical SAM superfamily. MoaA family. As to quaternary structure, monomer and homodimer. Requires [4Fe-4S] cluster as cofactor.

It catalyses the reaction GTP + AH2 + S-adenosyl-L-methionine = (8S)-3',8-cyclo-7,8-dihydroguanosine 5'-triphosphate + 5'-deoxyadenosine + L-methionine + A + H(+). Its pathway is cofactor biosynthesis; molybdopterin biosynthesis. Functionally, catalyzes the cyclization of GTP to (8S)-3',8-cyclo-7,8-dihydroguanosine 5'-triphosphate. The protein is GTP 3',8-cyclase of Haemophilus influenzae (strain ATCC 51907 / DSM 11121 / KW20 / Rd).